A 505-amino-acid polypeptide reads, in one-letter code: Lysine--tRNA ligase (505 aa).

2 residues coordinate Mg(2+): glutamate 415 and glutamate 422.

The protein belongs to the class-II aminoacyl-tRNA synthetase family. Homodimer. Mg(2+) serves as cofactor.

Its subcellular location is the cytoplasm. It catalyses the reaction tRNA(Lys) + L-lysine + ATP = L-lysyl-tRNA(Lys) + AMP + diphosphate. In Yersinia pseudotuberculosis serotype O:1b (strain IP 31758), this protein is Lysine--tRNA ligase.